The sequence spans 398 residues: Phosphoglycerate kinase (398 aa).

Substrate-binding positions include 24 to 26, R39, 62 to 65, R121, and R154; these read DFN and HFGR. ATP contacts are provided by residues K205, G296, E327, and 354–357; that span reads GGDS.

It belongs to the phosphoglycerate kinase family. In terms of assembly, monomer.

It localises to the cytoplasm. It catalyses the reaction (2R)-3-phosphoglycerate + ATP = (2R)-3-phospho-glyceroyl phosphate + ADP. The protein operates within carbohydrate degradation; glycolysis; pyruvate from D-glyceraldehyde 3-phosphate: step 2/5. This Trichodesmium erythraeum (strain IMS101) protein is Phosphoglycerate kinase.